The primary structure comprises 219 residues: Octanoyltransferase (219 aa).

In terms of domain architecture, BPL/LPL catalytic spans 31–219 (EDLPGFLVFC…KLKRRLLEVL (189 aa)). Substrate-binding positions include 69–76 (RGGRATYH), 153–155 (SVG), and 166–168 (GAA). Residue Cys184 is the Acyl-thioester intermediate of the active site.

Belongs to the LipB family.

Its subcellular location is the cytoplasm. The enzyme catalyses octanoyl-[ACP] + L-lysyl-[protein] = N(6)-octanoyl-L-lysyl-[protein] + holo-[ACP] + H(+). It participates in protein modification; protein lipoylation via endogenous pathway; protein N(6)-(lipoyl)lysine from octanoyl-[acyl-carrier-protein]: step 1/2. Functionally, catalyzes the transfer of endogenously produced octanoic acid from octanoyl-acyl-carrier-protein onto the lipoyl domains of lipoate-dependent enzymes. Lipoyl-ACP can also act as a substrate although octanoyl-ACP is likely to be the physiological substrate. The chain is Octanoyltransferase from Bdellovibrio bacteriovorus (strain ATCC 15356 / DSM 50701 / NCIMB 9529 / HD100).